Reading from the N-terminus, the 31-residue chain is Cytochrome b6-f complex subunit 6 (31 aa).

The helical transmembrane segment at 3–23 (TLTSYFGFLLVALTITLVLFI) threads the bilayer.

This sequence belongs to the PetL family. In terms of assembly, the 4 large subunits of the cytochrome b6-f complex are cytochrome b6, subunit IV (17 kDa polypeptide, PetD), cytochrome f and the Rieske protein, while the 4 small subunits are PetG, PetL, PetM and PetN. The complex functions as a dimer.

It localises to the plastid. The protein resides in the chloroplast thylakoid membrane. Its function is as follows. Component of the cytochrome b6-f complex, which mediates electron transfer between photosystem II (PSII) and photosystem I (PSI), cyclic electron flow around PSI, and state transitions. PetL is important for photoautotrophic growth as well as for electron transfer efficiency and stability of the cytochrome b6-f complex. This chain is Cytochrome b6-f complex subunit 6, found in Populus alba (White poplar).